The chain runs to 390 residues: 8-amino-7-oxononanoate synthase (390 aa).

Arginine 20 provides a ligand contact to substrate. Pyridoxal 5'-phosphate is bound at residue 107 to 108; it reads GF. Residue histidine 132 coordinates substrate. Residues serine 179, 204 to 207, and 235 to 238 each bind pyridoxal 5'-phosphate; these read DDAH and TLSK. Residue lysine 238 is modified to N6-(pyridoxal phosphate)lysine. A substrate-binding site is contributed by threonine 352.

This sequence belongs to the class-II pyridoxal-phosphate-dependent aminotransferase family. BioF subfamily. In terms of assembly, homodimer. It depends on pyridoxal 5'-phosphate as a cofactor.

The catalysed reaction is 6-carboxyhexanoyl-[ACP] + L-alanine + H(+) = (8S)-8-amino-7-oxononanoate + holo-[ACP] + CO2. It participates in cofactor biosynthesis; biotin biosynthesis. In terms of biological role, catalyzes the decarboxylative condensation of pimeloyl-[acyl-carrier protein] and L-alanine to produce 8-amino-7-oxononanoate (AON), [acyl-carrier protein], and carbon dioxide. The sequence is that of 8-amino-7-oxononanoate synthase from Exiguobacterium sibiricum (strain DSM 17290 / CCUG 55495 / CIP 109462 / JCM 13490 / 255-15).